Reading from the N-terminus, the 598-residue chain is F-box/WD repeat-containing protein 8 (598 aa).

At Met1 the chain carries N-acetylmethionine. The interval 17-93 is disordered; the sequence is LAQAQAPKKR…RSPLAREGAG (77 aa). Basic and acidic residues predominate over residues 29 to 40; the sequence is PEAAERRARRPE. Residues 61-71 are compositionally biased toward low complexity; that stretch reads EGAGRPPAARA. A phosphoserine mark is found at Ser83 and Ser85. The F-box domain occupies 113-159; it reads PFFDIQLPYELAINIFQYLDRKELGRCAQVSKTWKVIAEDEVLWYRL. 8 WD repeats span residues 201–250, 259–299, 300–340, 341–383, 384–429, 430–475, 476–513, and 514–561; these read AVSE…LESE, QPNV…FEHD, ARIQ…AEFE, VPKL…LLYA, HGPP…LKLG, NVLR…SAHQ, LRVS…EVYS, and GHPV…AYEF.

In terms of assembly, component of the Cul7-RING(FBXW8) complex consisting of CUL7, RBX1, SKP1 and FBXW8; within the complex interacts with CUL7 and SKP1. Interacts with GLMN isoform 1. Interacts with OBSL1, CUL1, CUL2, CCT6B, PFDN5, CCT2, CCT3, CCT6A, CCT7, VBP1, CCDC8, ARF1, TRIP13, PDCD5 and GORASP1. Interacts with MAP4K1/HPK1 (when autophosphorylated). Associated component of the 3M complex. Interacts with POUF51 (when phosphorylated on 'Ser-355'). In terms of processing, phosphorylation at Ser-85 by mTORC2 promotes FBXW8 stabilization, allowing its translocation to the cytosol in response to insulin.

It localises to the cytoplasm. The protein resides in the perinuclear region. Its subcellular location is the golgi apparatus. It participates in protein modification; protein ubiquitination. Functionally, substrate-recognition component of the Cul7-RING(FBXW8) ubiquitin ligase complex, which mediates the ubiquitination and subsequent proteasomal degradation of target proteins. The Cul7-RING(FBXW8) complex mediates ubiquitination and consequent degradation of GORASP1, acting as a component of the ubiquitin ligase pathway that regulates Golgi morphogenesis and dendrite patterning in brain. Mediates ubiquitination and degradation of IRS1 in a mTOR-dependent manner: the Cul7-RING(FBXW8) complex recognizes and binds IRS1 previously phosphorylated by S6 kinase (RPS6KB1 or RPS6KB2). The Cul7-RING(FBXW8) complex also mediates ubiquitination of MAP4K1/HPK1: recognizes and binds autophosphorylated MAP4K1/HPK1, leading to its degradation, thereby affecting cell proliferation and differentiation. The Cul7-RING(FBXW8) complex also mediates ubiquitination of phosphorylated cyclin-D1 (CCND1). The Cul7-RING(FBXW8) complex is however not a major regulator of CCND1 stability during the G1/S transition. Associated component of the 3M complex, suggesting that it mediates some of 3M complex functions. The sequence is that of F-box/WD repeat-containing protein 8 from Homo sapiens (Human).